The primary structure comprises 255 residues: Aliphatic sulfonates import ATP-binding protein SsuB (255 aa).

An ABC transporter domain is found at 7–231; the sequence is IKEKAFVQEG…PRNRTTPDFQ (225 aa). 39–46 lines the ATP pocket; the sequence is GPSGCGKS.

Belongs to the ABC transporter superfamily. Aliphatic sulfonates importer (TC 3.A.1.17.2) family. The complex is composed of two ATP-binding proteins (SsuB), two transmembrane proteins (SsuC) and a solute-binding protein (SsuA).

The protein resides in the cell membrane. The enzyme catalyses ATP + H2O + aliphatic sulfonate-[sulfonate-binding protein]Side 1 = ADP + phosphate + aliphatic sulfonateSide 2 + [sulfonate-binding protein]Side 1.. In terms of biological role, part of the ABC transporter complex SsuABC involved in aliphatic sulfonates import. Responsible for energy coupling to the transport system. Is also involved in taurine transport. In Bacillus subtilis (strain 168), this protein is Aliphatic sulfonates import ATP-binding protein SsuB.